Here is a 104-residue protein sequence, read N- to C-terminus: 2,4-dinitrotoluene dioxygenase system, ferredoxin component (104 aa).

The segment at 1 to 21 (MSENWIDAAARDEVPRGRRDR) is disordered. Residues 5-101 (WIDAAARDEV…VKIENMRVML (97 aa)) enclose the Rieske domain. The [2Fe-2S] cluster site is built by C45, H47, C64, and H67.

The protein belongs to the bacterial ring-hydroxylating dioxygenase ferredoxin component family. The 2,4-dinitrotoluene dioxygenase (DNTDO) multicomponent enzyme system is composed of an electron transfer component and a dioxygenase component (iron sulfur protein (ISP)). The electron transfer component is composed of a ferredoxin reductase (DntAa) and a ferredoxin (DntAb), and the dioxygenase component is formed of a large alpha subunit (DntAc) and a small beta subunit (DntAd). [2Fe-2S] cluster serves as cofactor.

Functionally, component of the 2,4-dinitrotoluene dioxygenase (DNTDO) multicomponent enzyme system which catalyzes the incorporation of both atoms of molecular oxygen into 2,4-dinitrotoluene (DNT) to form 4-methyl-5-nitrocatechol (MNC) and nitrite. Functions as an intermediate electron transfer protein via a specific interaction with iron sulfur protein components (ISP)(DntAc and DntAd). Also able to convert naphthalene to cis-(1R,2S)-dihydroxy-1,2-dihydronaphthalene. This Burkholderia sp. (strain RASC) protein is 2,4-dinitrotoluene dioxygenase system, ferredoxin component.